The chain runs to 338 residues: Fructose-1,6-bisphosphatase class 1 (338 aa).

Mg(2+) contacts are provided by Glu-92, Asp-115, Leu-117, and Asp-118. Substrate-binding positions include 118–121, Asn-211, Tyr-244, 262–264, and Lys-274; these read DGSS and YLY. Residue Glu-280 coordinates Mg(2+).

The protein belongs to the FBPase class 1 family. As to quaternary structure, homotetramer. Mg(2+) is required as a cofactor.

Its subcellular location is the cytoplasm. It catalyses the reaction beta-D-fructose 1,6-bisphosphate + H2O = beta-D-fructose 6-phosphate + phosphate. It participates in carbohydrate biosynthesis; gluconeogenesis. This Vibrio vulnificus (strain YJ016) protein is Fructose-1,6-bisphosphatase class 1.